Reading from the N-terminus, the 436-residue chain is MMATQTLSIDSYQDGQQMQVVTELKTEQDPNCSEPDAEGVSPPPVESQTPMDVDKQAIYRHPLFPLLALLFEKCEQSTQGSEGTTSASFDVDIENFVRKQEKEGKPFFCEDPETDNLMVKAIQVLRIHLLELEKVNELCKDFCSRYIACLKTKMNSETLLSGEPGSPYSPVQSQQIQSAITGTISPQGIVVPASALQQGNVAMATVAGGTVYQPVTVVTPQGQVVTQTLSPGTIRIQNSQLQLQLNQDLSILHQDDGSSKNKRGVLPKHATNVMRSWLFQHIGHPYPTEDEKKQIAAQTNLTLLQVNNWFINARRRILQPMLDSSCSETPKTKKKTAQNRPVQRFWPDSIASGVAQPPPSELTMSEGAVVTITTPVNMNVDSLQSLSSDGATLAVQQVMMAGQSEDESVDSTEEDAGALAPAHISGLVLENSDSLQ.

Polar residues predominate over residues 1 to 20 (MMATQTLSIDSYQDGQQMQV). The interval 1-49 (MMATQTLSIDSYQDGQQMQVVTELKTEQDPNCSEPDAEGVSPPPVESQT) is disordered. Phosphoserine occurs at positions 33 and 41. Positions 80 to 163 (GSEGTTSASF…MNSETLLSGE (84 aa)) constitute an MEIS N-terminal domain. The segment at residues 259-321 (SKNKRGVLPK…NARRRILQPM (63 aa)) is a DNA-binding region (homeobox; TALE-type). Residues 401–436 (AGQSEDESVDSTEEDAGALAPAHISGLVLENSDSLQ) form a disordered region. Positions 404–416 (SEDESVDSTEEDA) are enriched in acidic residues.

This sequence belongs to the TALE/MEIS homeobox family. As to quaternary structure, interacts with MN1. As to expression, ubiquitous. Isoform 2 is expressed in all examined tissues except in bone marrow.

The protein localises to the nucleus. Its function is as follows. Activates transcription in the presence of PBX1A and HOXA1. This is Homeobox protein PKNOX1 from Homo sapiens (Human).